Here is a 459-residue protein sequence, read N- to C-terminus: Glutamyl-tRNA(Gln) amidotransferase subunit A, mitochondrial (459 aa).

Catalysis depends on charge relay system residues Lys-37 and Ser-114. Ser-138 functions as the Acyl-ester intermediate in the catalytic mechanism.

It belongs to the amidase family. GatA subfamily. Subunit of the heterotrimeric GatFAB amidotransferase (AdT) complex, composed of A, B and F subunits.

It is found in the mitochondrion. It catalyses the reaction L-glutamyl-tRNA(Gln) + L-glutamine + ATP + H2O = L-glutaminyl-tRNA(Gln) + L-glutamate + ADP + phosphate + H(+). In terms of biological role, allows the formation of correctly charged Gln-tRNA(Gln) through the transamidation of misacylated Glu-tRNA(Gln) in the mitochondria. The reaction takes place in the presence of glutamine and ATP through an activated gamma-phospho-Glu-tRNA(Gln). This chain is Glutamyl-tRNA(Gln) amidotransferase subunit A, mitochondrial, found in Yarrowia lipolytica (strain CLIB 122 / E 150) (Yeast).